A 186-amino-acid polypeptide reads, in one-letter code: Methyl-CpG-binding domain protein 3-like 1 (186 aa).

Positions 1-104 (MGKTSQRKQC…TSTDTVASAS (104 aa)) are transcription repressor.

It belongs to the MBD3L family. Highly expressed in testis. Not detected in the other tissues tested.

It is found in the nucleus. Functionally, transcriptional repressor. This Mus musculus (Mouse) protein is Methyl-CpG-binding domain protein 3-like 1 (Mbd3l1).